The chain runs to 427 residues: ATP-sensitive inward rectifier potassium channel 12 (427 aa).

Residues 1 to 77 (MTAASRANPY…LADMFTTCVD (77 aa)) lie on the Cytoplasmic side of the membrane. Position 75 is an S-nitrosocysteine (cysteine 75). Residues 78 to 104 (IRWRYMLLIFSLAFLASWLLFGIIFWV) traverse the membrane as a helical segment. Residues arginine 79 and arginine 81 each contribute to the a 1,2-diacyl-sn-glycero-3-phospho-(1D-myo-inositol-4,5-bisphosphate) site. The Extracellular segment spans residues 105-129 (IAVAHGDLEPAEGRGRTPCVLQVHG). Cysteines 123 and 155 form a disulfide. An intramembrane region (helical; Pore-forming) is located at residues 130–146 (FMAAFLFSIETQTTIGY). K(+)-binding residues include threonine 143, isoleucine 144, glycine 145, and tyrosine 146. The Selectivity filter signature appears at 143 to 148 (TIGYGL). Residues 147 to 155 (GLRCVTEEC) lie on the Extracellular side of the membrane. A helical transmembrane segment spans residues 156–183 (PVAVFMVVAQSIVGCIIDSFMIGAIMAK). Residues lysine 183 and lysine 188 each contribute to the a 1,2-diacyl-sn-glycero-3-phospho-(1D-myo-inositol-4,5-bisphosphate) site. At 184-427 (MARPKKRAQT…ERPYRRESEI (244 aa)) the chain is on the cytoplasmic side. The disordered stretch occupies residues 387 to 427 (DEEDEVATDRDGRSPQPEHDFDRLQASSAALERPYRRESEI). Basic and acidic residues predominate over residues 393-409 (ATDRDGRSPQPEHDFDR). The PDZ-binding signature appears at 425 to 427 (SEI).

Belongs to the inward rectifier-type potassium channel (TC 1.A.2.1) family. KCNJ12 subfamily. In terms of assembly, homotetramer. Forms heteromer with KCNJ4. Can form heteromeric channels with Kir2.6/KCNJ18. Association, via its PDZ-recognition domain, with LIN7A, LIN7B, LIN7C, DLG1, CASK and APBA1 plays a key role in its localization and trafficking. Highest level in cerebellum.

It is found in the membrane. The protein resides in the cell membrane. It localises to the sarcolemma. The protein localises to the T-tubule. The enzyme catalyses K(+)(in) = K(+)(out). With respect to regulation, activated by phosphatidylinositol 4,5-biphosphate (PtdIns(4,5)P2). PtdIns(4,5)P2 binding to the cytoplasmic side of the channel triggers a conformation change leading to channel opening. Inhibited by Ba(2+). Functionally, inward rectifying potassium channel that probably participates in controlling the resting membrane potential in electrically excitable cells. It probably participates in establishing action potential waveform and excitability of neuronal and muscle tissues. Inward rectifier potassium channels are characterized by a greater tendency to allow potassium to flow into the cell rather than out of it. Their voltage dependence is regulated by the concentration of extracellular potassium; as external potassium is raised, the voltage range of the channel opening shifts to more positive voltages. The inward rectification is mainly due to the blockage of outward current by internal magnesium. This Mus musculus (Mouse) protein is ATP-sensitive inward rectifier potassium channel 12 (Kcnj12).